Here is a 470-residue protein sequence, read N- to C-terminus: 3-isopropylmalate dehydratase large subunit (470 aa).

[4Fe-4S] cluster is bound by residues Cys-348, Cys-409, and Cys-412.

It belongs to the aconitase/IPM isomerase family. LeuC type 1 subfamily. As to quaternary structure, heterodimer of LeuC and LeuD. [4Fe-4S] cluster serves as cofactor.

The catalysed reaction is (2R,3S)-3-isopropylmalate = (2S)-2-isopropylmalate. It participates in amino-acid biosynthesis; L-leucine biosynthesis; L-leucine from 3-methyl-2-oxobutanoate: step 2/4. In terms of biological role, catalyzes the isomerization between 2-isopropylmalate and 3-isopropylmalate, via the formation of 2-isopropylmaleate. The sequence is that of 3-isopropylmalate dehydratase large subunit from Thioalkalivibrio sulfidiphilus (strain HL-EbGR7).